A 358-amino-acid polypeptide reads, in one-letter code: MRDRLLAAEKVKAIDWRDDALYLLDQRVLPFEEVWHRYTTAEGVAEAIRTMVVRGAPAIGISAAYGAVLGARARIAEGGDWYPALEEDMQLLADSRPTAVNLFWALNRMRDRLMRVKDGDDPLVALEAESVAIHLSDREANLTMAQLGADLIRRHQGNLQTVLTHCNTGALATGGFGTALGVIRAAHLEGMIERVYADETRPWLQGSRLTAWELANEGIPVTLNADSAAAHLMRTKGITWVIVGADRITANGDVANKIGTYQLAVAAMHHGVRFMVVAPSSTIDMEMASGDDIIIEERDGRELLEVGGQRVGAQVEAFNPVFDVTPADLIDAIVTEKGIVERPDTARMAQLMSRKHLH.

Substrate is bound by residues 54–56, R96, and Q205; that span reads RGA. The active-site Proton donor is D246. 256–257 provides a ligand contact to substrate; sequence NK.

This sequence belongs to the eIF-2B alpha/beta/delta subunits family. MtnA subfamily.

The enzyme catalyses 5-(methylsulfanyl)-alpha-D-ribose 1-phosphate = 5-(methylsulfanyl)-D-ribulose 1-phosphate. It participates in amino-acid biosynthesis; L-methionine biosynthesis via salvage pathway; L-methionine from S-methyl-5-thio-alpha-D-ribose 1-phosphate: step 1/6. Its function is as follows. Catalyzes the interconversion of methylthioribose-1-phosphate (MTR-1-P) into methylthioribulose-1-phosphate (MTRu-1-P). This is Methylthioribose-1-phosphate isomerase from Pseudomonas savastanoi pv. phaseolicola (strain 1448A / Race 6) (Pseudomonas syringae pv. phaseolicola (strain 1448A / Race 6)).